We begin with the raw amino-acid sequence, 370 residues long: Protein DUF642 L-GALACTONO-1,4-LACTONE-RESPONSIVE GENE 1 (370 aa).

The first 22 residues, 1-22 (MMYQEAALLLALLFISSNVVLS), serve as a signal peptide directing secretion. N124 is a glycosylation site (N-linked (GlcNAc...) asparagine).

As to expression, expressed at low levels in roots, seedlings and leaves.

The protein resides in the secreted. It is found in the cell wall. The chain is Protein DUF642 L-GALACTONO-1,4-LACTONE-RESPONSIVE GENE 1 from Arabidopsis thaliana (Mouse-ear cress).